The chain runs to 387 residues: Carboxyaminopropylagmatine decarboxylase (387 aa).

Lys-52 carries the post-translational modification N6-(pyridoxal phosphate)lysine.

Belongs to the Orn/Lys/Arg decarboxylase class-II family. Pyridoxal 5'-phosphate is required as a cofactor.

It catalyses the reaction N(1)-[(S)-3-amino-3-carboxypropyl]agmatine + H(+) = N(1)-(3-aminopropyl)agmatine + CO2. It participates in amine and polyamine biosynthesis; spermidine biosynthesis. In terms of biological role, decarboxylase involved in the biosynthesis of spermidine via the carboxyaminopropylagmatine (CAPA) pathway. Catalyzes the decarboxylation of CAPA to form aminopropylagmatine (APA). Can also decarboxylate carboxyspermidine and carboxynorspermidine, but not ornithine, arginine, lysine and meso-diaminopimelate. In Synechocystis sp. (strain ATCC 27184 / PCC 6803 / Kazusa), this protein is Carboxyaminopropylagmatine decarboxylase.